The primary structure comprises 2698 residues: Zinc finger protein 292 (2698 aa).

Residues 567–589 (YSCPICAKNFNSKDSFVPHVTLH) form a C2H2-type 1 zinc finger. S654 is modified (phosphoserine). C2H2-type zinc fingers lie at residues 681–705 (FNCPVTFCKKGFKYFKNLIAHVKGH), 722–744 (VICQYCRRHFVSVTHLNDHLQMH), 750–774 (YICIQMKCKAGFNSYAELLAHRKEH), 779–803 (AKCLFPKCGRIFSQAYLLYDHEAQH), 807–831 (YTCKFTGCGKVYRSQSEMEKHQDGH), and 1085–1110 (FSCQVEGCTRTYNSSQSIGKHMKTAH). The segment covering 822–834 (SEMEKHQDGHSHP) has biased composition (basic and acidic residues). The tract at residues 822 to 894 (SEMEKHQDGH…AEPAVTKHGQ (73 aa)) is disordered. K1104 is modified (N6-acetyllysine). S1146 bears the Phosphoserine mark. Polar residues predominate over residues 1278-1325 (NSTNHYPSQTDGNINSSFLKGGSSENGVFPSQVSSADDFSSTSAQPST). The interval 1278 to 1349 (NSTNHYPSQT…KERKPKHNKR (72 aa)) is disordered. The C2H2-type 8; degenerate zinc-finger motif lies at 1361–1383 (FICSRCYRAFTNPRSLGGHLSKR). Composition is skewed to polar residues over residues 1574–1603 (FSSSTEPPQNFTNNSAHVSVISGPQNTRSS) and 1624–1633 (SVSNTSQNVL). Positions 1574 to 1656 (FSSSTEPPQN…PVPDTNTRSD (83 aa)) are disordered. 2 consecutive C2H2-type zinc fingers follow at residues 1879–1904 (FVCQNQGCNYSAMTKDALFKHYGKIH) and 1924–1949 (FKCVVPSCTKTFTRNSNLRAHCQLVH). The tract at residues 1964 to 1997 (PYGRKSQSENLSSPQNNQVKKQPSMAEETKTESQ) is disordered. Polar residues predominate over residues 1971–1984 (SENLSSPQNNQVKK). Residue K2020 is modified to N6-acetyllysine. Over residues 2021–2032 (QLAEKKSPEKPE) the composition is skewed to basic and acidic residues. A disordered region spans residues 2021-2075 (QLAEKKSPEKPESSSQPVTSSAEQYNANLANLKTKGRKNKRHRKEKEEKREKNPV). Positions 2038–2051 (VTSSAEQYNANLAN) are enriched in polar residues. Basic residues predominate over residues 2054–2064 (TKGRKNKRHRK). C2H2-type zinc fingers lie at residues 2091-2116 (YCCVHQGCFAAFTIQQNLILHYQAVH), 2149-2174 (FRCQVSDCSRIFQAITGLIQHYMKLH), 2193-2218 (FPCDQLECKLSFTTYLSYVVHLEVDH), and 2233-2258 (YKCDCEGCDRIYATRSNLLRHIFNKH). Over residues 2262-2271 (HKAHLIRPRK) the composition is skewed to basic residues. The interval 2262–2323 (HKAHLIRPRK…KSNLENKSAK (62 aa)) is disordered. The segment at 2362-2386 (YPCMIKGCTSVVTSESNIIRHYKCH) adopts a C2H2-type 15 zinc-finger fold. Disordered stretches follow at residues 2411-2454 (GKEI…GEKD), 2467-2553 (LINE…EEHP), and 2580-2608 (KQKKNSDRDHSNSGSKRGSHSSSRRHVDK). Residues 2421 to 2437 (KNDKKDPDSSVLEKNDN) show a composition bias toward basic and acidic residues. Residues 2470–2488 (EDSTNAENQGNTTLKGNNE) are compositionally biased toward polar residues. Basic and acidic residues-rich tracts occupy residues 2489-2501 (FQEHDSCTSERQK) and 2580-2590 (KQKKNSDRDHS). Basic residues predominate over residues 2596-2606 (RGSHSSSRRHV).

This sequence belongs to the krueppel C2H2-type zinc-finger protein family. As to expression, expressed in postnatal day 1 (P1) pituitary. Also detected in presomatotrophic cell line GHFT1-5.

The protein localises to the nucleus. In terms of biological role, may be involved in transcriptional regulation. The protein is Zinc finger protein 292 of Mus musculus (Mouse).